The chain runs to 142 residues: Hemoglobin subunit alpha-A (142 aa).

Residues 2–142 (VLSAADKTNV…VGAVLTAKYR (141 aa)) enclose the Globin domain. Position 59 (histidine 59) interacts with O2. Histidine 88 contributes to the heme b binding site.

This sequence belongs to the globin family. In terms of assembly, heterotetramer of two alpha chains and two beta chains. Red blood cells.

In terms of biological role, involved in oxygen transport from the lung to the various peripheral tissues. This is Hemoglobin subunit alpha-A (HBAA) from Cairina moschata (Muscovy duck).